A 479-amino-acid polypeptide reads, in one-letter code: Adenosylhomocysteinase (479 aa).

Substrate-binding residues include T66, D142, and E203. Position 204–206 (204–206 (TTT)) interacts with NAD(+). Substrate contacts are provided by K233 and D237. NAD(+) contacts are provided by residues N238, 267 to 272 (GYGDVG), E290, N325, 346 to 348 (IGH), and N394.

It belongs to the adenosylhomocysteinase family. Requires NAD(+) as cofactor.

The protein resides in the cytoplasm. The catalysed reaction is S-adenosyl-L-homocysteine + H2O = L-homocysteine + adenosine. Its pathway is amino-acid biosynthesis; L-homocysteine biosynthesis; L-homocysteine from S-adenosyl-L-homocysteine: step 1/1. In terms of biological role, may play a key role in the regulation of the intracellular concentration of adenosylhomocysteine. This is Adenosylhomocysteinase from Nitratidesulfovibrio vulgaris (strain DSM 19637 / Miyazaki F) (Desulfovibrio vulgaris).